We begin with the raw amino-acid sequence, 179 residues long: Sec-independent protein translocase protein TatB (179 aa).

A helical transmembrane segment spans residues 2–22; sequence FNGVGWGEVVVLLLIGLFVFG. Over residues 98–109 the composition is skewed to low complexity; that stretch reads LLGDDPPAAPSL. Residues 98-179 are disordered; sequence LLGDDPPAAP…TEVPFDSDAT (82 aa).

This sequence belongs to the TatB family. In terms of assembly, the Tat system comprises two distinct complexes: a TatABC complex, containing multiple copies of TatA, TatB and TatC subunits, and a separate TatA complex, containing only TatA subunits. Substrates initially bind to the TatABC complex, which probably triggers association of the separate TatA complex to form the active translocon.

It localises to the cell membrane. Functionally, part of the twin-arginine translocation (Tat) system that transports large folded proteins containing a characteristic twin-arginine motif in their signal peptide across membranes. Together with TatC, TatB is part of a receptor directly interacting with Tat signal peptides. TatB may form an oligomeric binding site that transiently accommodates folded Tat precursor proteins before their translocation. This chain is Sec-independent protein translocase protein TatB, found in Frankia casuarinae (strain DSM 45818 / CECT 9043 / HFP020203 / CcI3).